A 144-amino-acid polypeptide reads, in one-letter code: Maximins 1/H12 (144 aa).

Residues 1-18 form the signal peptide; the sequence is MNFKYIVAVSFLIASAYA. Positions 19 to 43 are excised as a propeptide; sequence RSEENDEQSLSQRDVLEEESLREIR. Asparagine 70 carries the asparagine amide modification. The propeptide occupies 74–123; that stretch reads TAEEHEVMKRLEVVMRDLDSLDYPEEASERETRDFNQEEIANLYTKKEKR. Isoleucine 143 carries the post-translational modification Isoleucine amide.

Belongs to the bombinin family. Expressed by the skin glands.

It localises to the secreted. Its function is as follows. Maximin-1 shows antibacterial activity against both Gram-positive and Gram-negative bacteria. It also shows antimicrobial activity against the fungus C.albicans, but not against A.flavus nor P.uticale. It has little hemolytic activity. It possess a significant cytotoxicity against tumor cell lines. It does not possess a significant anti-HIV activity. It shows high spermicidal activity. Functionally, maximin-H12 shows antimicrobial activity against bacteria and against the fungus C.albicans. Shows strong hemolytic activity. The protein is Maximins 1/H12 of Bombina maxima (Giant fire-bellied toad).